The chain runs to 353 residues: Phospho-N-acetylmuramoyl-pentapeptide-transferase (353 aa).

10 consecutive transmembrane segments (helical) span residues 24–44 (LGFF…ILWA), 66–86 (TPTM…VLCA), 88–108 (LGNL…FVGF), 129–149 (FGML…KGLD), 160–180 (PLFE…FLST), 192–212 (GLAS…VYVA), 229–249 (VGEL…FLWY), 256–276 (VFMG…NAIV), 281–301 (ILLV…ILQV), and 330–350 (KVIV…LLSL).

Belongs to the glycosyltransferase 4 family. MraY subfamily. The cofactor is Mg(2+).

Its subcellular location is the cell inner membrane. It catalyses the reaction UDP-N-acetyl-alpha-D-muramoyl-L-alanyl-gamma-D-glutamyl-meso-2,6-diaminopimeloyl-D-alanyl-D-alanine + di-trans,octa-cis-undecaprenyl phosphate = di-trans,octa-cis-undecaprenyl diphospho-N-acetyl-alpha-D-muramoyl-L-alanyl-D-glutamyl-meso-2,6-diaminopimeloyl-D-alanyl-D-alanine + UMP. The protein operates within cell wall biogenesis; peptidoglycan biosynthesis. Functionally, catalyzes the initial step of the lipid cycle reactions in the biosynthesis of the cell wall peptidoglycan: transfers peptidoglycan precursor phospho-MurNAc-pentapeptide from UDP-MurNAc-pentapeptide onto the lipid carrier undecaprenyl phosphate, yielding undecaprenyl-pyrophosphoryl-MurNAc-pentapeptide, known as lipid I. In Helicobacter pylori (strain HPAG1), this protein is Phospho-N-acetylmuramoyl-pentapeptide-transferase.